Here is a 488-residue protein sequence, read N- to C-terminus: Cobyric acid synthase (488 aa).

The region spanning 255-442 (ALKIAVPVLP…LHGLFGSDAY (188 aa)) is the GATase cobBQ-type domain. Residue Cys-337 is the Nucleophile of the active site. The active site involves His-434.

This sequence belongs to the CobB/CobQ family. CobQ subfamily.

It participates in cofactor biosynthesis; adenosylcobalamin biosynthesis. Catalyzes amidations at positions B, D, E, and G on adenosylcobyrinic A,C-diamide. NH(2) groups are provided by glutamine, and one molecule of ATP is hydrogenolyzed for each amidation. The polypeptide is Cobyric acid synthase (Rhizobium johnstonii (strain DSM 114642 / LMG 32736 / 3841) (Rhizobium leguminosarum bv. viciae)).